The sequence spans 334 residues: tRNA N6-adenosine threonylcarbamoyltransferase (334 aa).

Fe cation contacts are provided by His107 and His111. Substrate is bound by residues 129 to 133 (LVSGG), Asp162, Gly175, and Asn269. Asp297 is a Fe cation binding site.

It belongs to the KAE1 / TsaD family. The cofactor is Fe(2+).

Its subcellular location is the cytoplasm. The enzyme catalyses L-threonylcarbamoyladenylate + adenosine(37) in tRNA = N(6)-L-threonylcarbamoyladenosine(37) in tRNA + AMP + H(+). Functionally, required for the formation of a threonylcarbamoyl group on adenosine at position 37 (t(6)A37) in tRNAs that read codons beginning with adenine. Is involved in the transfer of the threonylcarbamoyl moiety of threonylcarbamoyl-AMP (TC-AMP) to the N6 group of A37, together with TsaE and TsaB. TsaD likely plays a direct catalytic role in this reaction. This is tRNA N6-adenosine threonylcarbamoyltransferase from Campylobacter concisus (strain 13826).